The sequence spans 205 residues: Large ribosomal subunit protein bL21 (205 aa).

A disordered region spans residues 107-137 (APAKKAAAKKEEAPKADTAPKAAAAPTEEAA). The span at 122–137 (ADTAPKAAAAPTEEAA) shows a compositional bias: low complexity.

Belongs to the bacterial ribosomal protein bL21 family. As to quaternary structure, part of the 50S ribosomal subunit. Contacts protein L20.

This protein binds to 23S rRNA in the presence of protein L20. The sequence is that of Large ribosomal subunit protein bL21 from Hyphomonas neptunium (strain ATCC 15444).